Here is a 393-residue protein sequence, read N- to C-terminus: MSKDTTTYQGVTEIGSVPAYLVLADGRTFTGFGFGAIGTTLGEAVFTTAMTGYQETMTDPSYHRQIVVATAPQIGNTGWNDEDNESRDGKIWVAGLVIRDLAARVSNWRATTSLQQEMAGQGIVGIGGIDTRALVRHLRNEGSIAAGIFSGADAQRPVEELVEIVKNQPAMTGANLSVEVSADETYVIEAEGEERHTVVAYDLGIKQNTPRRFSARGVRTVIVPAETPFEDIKQYNPSGVFISNGPGDPAAADVMVDIVREVLEADIPFFGICFGNQILGRAFGMETYKLKFGHRGINVPVKNHITGKIDITAQNHGFALKGEAGQEFETDFGTAIVTHTCLNDGVVEGIALKSGRAYSVQYHPEAAAGPNDASPLFDQFVELMDADAQKKGA.

A CPSase region spans residues 1–194; sequence MSKDTTTYQG…TYVIEAEGEE (194 aa). The L-glutamine site is built by S61, G245, and G247. Residues 195-390 enclose the Glutamine amidotransferase type-1 domain; it reads RHTVVAYDLG…VELMDADAQK (196 aa). C273 (nucleophile) is an active-site residue. F274, Q277, N315, G317, and F318 together coordinate L-glutamine. Catalysis depends on residues H363 and E365.

Belongs to the CarA family. Composed of two chains; the small (or glutamine) chain promotes the hydrolysis of glutamine to ammonia, which is used by the large (or ammonia) chain to synthesize carbamoyl phosphate. Tetramer of heterodimers (alpha,beta)4.

The enzyme catalyses hydrogencarbonate + L-glutamine + 2 ATP + H2O = carbamoyl phosphate + L-glutamate + 2 ADP + phosphate + 2 H(+). It catalyses the reaction L-glutamine + H2O = L-glutamate + NH4(+). Its pathway is amino-acid biosynthesis; L-arginine biosynthesis; carbamoyl phosphate from bicarbonate: step 1/1. The protein operates within pyrimidine metabolism; UMP biosynthesis via de novo pathway; (S)-dihydroorotate from bicarbonate: step 1/3. Its function is as follows. Small subunit of the glutamine-dependent carbamoyl phosphate synthetase (CPSase). CPSase catalyzes the formation of carbamoyl phosphate from the ammonia moiety of glutamine, carbonate, and phosphate donated by ATP, constituting the first step of 2 biosynthetic pathways, one leading to arginine and/or urea and the other to pyrimidine nucleotides. The small subunit (glutamine amidotransferase) binds and cleaves glutamine to supply the large subunit with the substrate ammonia. This Corynebacterium glutamicum (strain ATCC 13032 / DSM 20300 / JCM 1318 / BCRC 11384 / CCUG 27702 / LMG 3730 / NBRC 12168 / NCIMB 10025 / NRRL B-2784 / 534) protein is Carbamoyl phosphate synthase small chain.